The primary structure comprises 353 residues: uncharacterized protein (353 aa).

The tract at residues isoleucine 69–serine 106 is disordered. Low complexity predominate over residues serine 70–arginine 86. Residues glycine 319–glycine 353 adopt a coiled-coil conformation.

This is an uncharacterized protein from Gibberella zeae (strain ATCC MYA-4620 / CBS 123657 / FGSC 9075 / NRRL 31084 / PH-1) (Wheat head blight fungus).